The chain runs to 345 residues: Trans-enoyl reductase tndF (345 aa).

Positions 1–26 (MAREHQAAILPQPGGPLSVGMRPTPK) are disordered. NADP(+)-binding positions include 44–49 (CDYYQR), 168–171 (SSSV), 191–194 (SPEH), Tyr-209, and 244–245 (LD).

It belongs to the zinc-containing alcohol dehydrogenase family.

Its pathway is secondary metabolite biosynthesis; terpenoid biosynthesis. Trans-enoyl reductase; part of the gene cluster that mediates the biosynthesis of talaronoid C, a fusicoccane diterpenoid with an unprecedented tricyclic 5/8/6 ring system. The first step in the pathway is performed by the fusicoccadiene synthase tndC that possesses both prenyl transferase and terpene cyclase activity, converting isopentenyl diphosphate and dimethylallyl diphosphate into geranylgeranyl diphosphate (GGDP) and further converting GGDP into talarodiene, a precursor for talaronoid C. The remaining enzymes from the cluster include the cytochrome P450 monooxygenase tndB, the aldehyde reductase tndE and the alcohol dehydrogenase tndF that are involved in the conversion of talarodiene into talaronoid C. This chain is Trans-enoyl reductase tndF, found in Aspergillus flavipes.